Consider the following 184-residue polypeptide: ATP synthase subunit b, chloroplastic (184 aa).

A helical membrane pass occupies residues 27–49; the sequence is LATNPINLSVVLGVLIFFGKGVL.

It belongs to the ATPase B chain family. As to quaternary structure, F-type ATPases have 2 components, F(1) - the catalytic core - and F(0) - the membrane proton channel. F(1) has five subunits: alpha(3), beta(3), gamma(1), delta(1), epsilon(1). F(0) has four main subunits: a(1), b(1), b'(1) and c(10-14). The alpha and beta chains form an alternating ring which encloses part of the gamma chain. F(1) is attached to F(0) by a central stalk formed by the gamma and epsilon chains, while a peripheral stalk is formed by the delta, b and b' chains.

It localises to the plastid. The protein localises to the chloroplast thylakoid membrane. Its function is as follows. F(1)F(0) ATP synthase produces ATP from ADP in the presence of a proton or sodium gradient. F-type ATPases consist of two structural domains, F(1) containing the extramembraneous catalytic core and F(0) containing the membrane proton channel, linked together by a central stalk and a peripheral stalk. During catalysis, ATP synthesis in the catalytic domain of F(1) is coupled via a rotary mechanism of the central stalk subunits to proton translocation. Component of the F(0) channel, it forms part of the peripheral stalk, linking F(1) to F(0). The sequence is that of ATP synthase subunit b, chloroplastic from Phalaenopsis aphrodite subsp. formosana (Moth orchid).